An 88-amino-acid polypeptide reads, in one-letter code: Toxin RelE3 (88 aa).

This sequence belongs to the RelE toxin family. In terms of assembly, forms heterodimers with RelB3 and possibly a heterotetramer RelE3-RelB3(2)-RelE3 from 2 heterodimers. The heterotetramer is probably not very stable in solution.

Toxic component of a type II toxin-antitoxin (TA) system. Has RNase activity. Is very toxic upon expression in E.coli. Its toxic activity is probably neutralized by the cognate antitoxin RelB3. The polypeptide is Toxin RelE3 (relE3) (Methanocaldococcus jannaschii (strain ATCC 43067 / DSM 2661 / JAL-1 / JCM 10045 / NBRC 100440) (Methanococcus jannaschii)).